Consider the following 424-residue polypeptide: Glutamyl-tRNA reductase (424 aa).

Residues 51–54 (TCNR), S99, 104–106 (EDQ), and Q110 contribute to the substrate site. Residue C52 is the Nucleophile of the active site. Residue 179–184 (GTGEMG) participates in NADP(+) binding.

It belongs to the glutamyl-tRNA reductase family. Homodimer.

It catalyses the reaction (S)-4-amino-5-oxopentanoate + tRNA(Glu) + NADP(+) = L-glutamyl-tRNA(Glu) + NADPH + H(+). It functions in the pathway porphyrin-containing compound metabolism; protoporphyrin-IX biosynthesis; 5-aminolevulinate from L-glutamyl-tRNA(Glu): step 1/2. In terms of biological role, catalyzes the NADPH-dependent reduction of glutamyl-tRNA(Glu) to glutamate 1-semialdehyde (GSA). The chain is Glutamyl-tRNA reductase from Methanospirillum hungatei JF-1 (strain ATCC 27890 / DSM 864 / NBRC 100397 / JF-1).